Consider the following 257-residue polypeptide: Acetylglutamate kinase (257 aa).

Substrate contacts are provided by residues 40-41 (GG), R62, and N155.

Belongs to the acetylglutamate kinase family. ArgB subfamily.

It localises to the cytoplasm. It catalyses the reaction N-acetyl-L-glutamate + ATP = N-acetyl-L-glutamyl 5-phosphate + ADP. It functions in the pathway amino-acid biosynthesis; L-arginine biosynthesis; N(2)-acetyl-L-ornithine from L-glutamate: step 2/4. Functionally, catalyzes the ATP-dependent phosphorylation of N-acetyl-L-glutamate. The protein is Acetylglutamate kinase of Shouchella clausii (strain KSM-K16) (Alkalihalobacillus clausii).